The chain runs to 457 residues: tRNA-2-methylthio-N(6)-dimethylallyladenosine synthase (457 aa).

The 118-residue stretch at 3–120 (KKVYVKTFGC…LPQMIDKRRE (118 aa)) folds into the MTTase N-terminal domain. Cysteine 12, cysteine 49, cysteine 83, cysteine 157, cysteine 161, and cysteine 164 together coordinate [4Fe-4S] cluster. The 235-residue stretch at 143-377 (RVDGPSAFVS…QATIEENVQR (235 aa)) folds into the Radical SAM core domain. The region spanning 380 to 447 (DSMVGKIERI…PHSLRGELVL (68 aa)) is the TRAM domain.

It belongs to the methylthiotransferase family. MiaB subfamily. As to quaternary structure, monomer. Requires [4Fe-4S] cluster as cofactor.

It is found in the cytoplasm. The catalysed reaction is N(6)-dimethylallyladenosine(37) in tRNA + (sulfur carrier)-SH + AH2 + 2 S-adenosyl-L-methionine = 2-methylsulfanyl-N(6)-dimethylallyladenosine(37) in tRNA + (sulfur carrier)-H + 5'-deoxyadenosine + L-methionine + A + S-adenosyl-L-homocysteine + 2 H(+). In terms of biological role, catalyzes the methylthiolation of N6-(dimethylallyl)adenosine (i(6)A), leading to the formation of 2-methylthio-N6-(dimethylallyl)adenosine (ms(2)i(6)A) at position 37 in tRNAs that read codons beginning with uridine. The chain is tRNA-2-methylthio-N(6)-dimethylallyladenosine synthase from Paraburkholderia xenovorans (strain LB400).